We begin with the raw amino-acid sequence, 123 residues long: UPF0299 membrane protein VV1471 (123 aa).

A run of 4 helical transmembrane segments spans residues 8–28 (LFGL…GSGI), 35–55 (SVPG…IGLV), 71–91 (MILL…MLIA), and 94–114 (LPII…LGWL).

The protein belongs to the UPF0299 family.

The protein localises to the cell inner membrane. The protein is UPF0299 membrane protein VV1471 of Vibrio vulnificus (strain YJ016).